Reading from the N-terminus, the 351-residue chain is Nicotinate-nucleotide--dimethylbenzimidazole phosphoribosyltransferase (351 aa).

The active-site Proton acceptor is E318.

The protein belongs to the CobT family.

The catalysed reaction is 5,6-dimethylbenzimidazole + nicotinate beta-D-ribonucleotide = alpha-ribazole 5'-phosphate + nicotinate + H(+). It participates in nucleoside biosynthesis; alpha-ribazole biosynthesis; alpha-ribazole from 5,6-dimethylbenzimidazole: step 1/2. In terms of biological role, catalyzes the synthesis of alpha-ribazole-5'-phosphate from nicotinate mononucleotide (NAMN) and 5,6-dimethylbenzimidazole (DMB). The sequence is that of Nicotinate-nucleotide--dimethylbenzimidazole phosphoribosyltransferase from Chloroflexus aurantiacus (strain ATCC 29366 / DSM 635 / J-10-fl).